A 173-amino-acid chain; its full sequence is Ribosome maturation factor RimM (173 aa).

The 72-residue stretch at 102–173 (EGEYYWSDLI…TMLVDWDPEF (72 aa)) folds into the PRC barrel domain.

This sequence belongs to the RimM family. As to quaternary structure, binds ribosomal protein uS19.

The protein resides in the cytoplasm. An accessory protein needed during the final step in the assembly of 30S ribosomal subunit, possibly for assembly of the head region. Essential for efficient processing of 16S rRNA. May be needed both before and after RbfA during the maturation of 16S rRNA. It has affinity for free ribosomal 30S subunits but not for 70S ribosomes. This is Ribosome maturation factor RimM from Methylobacillus flagellatus (strain ATCC 51484 / DSM 6875 / VKM B-1610 / KT).